The primary structure comprises 373 residues: UDP-N-acetylglucosamine--N-acetylmuramyl-(pentapeptide) pyrophosphoryl-undecaprenol N-acetylglucosamine transferase (373 aa).

UDP-N-acetyl-alpha-D-glucosamine contacts are provided by residues 10–12 (TGG), asparagine 124, serine 195, and glutamine 297.

Belongs to the glycosyltransferase 28 family. MurG subfamily.

It is found in the cell membrane. It carries out the reaction Mur2Ac(oyl-L-Ala-gamma-D-Glu-L-Lys-D-Ala-D-Ala)-di-trans,octa-cis-undecaprenyl diphosphate + UDP-N-acetyl-alpha-D-glucosamine = beta-D-GlcNAc-(1-&gt;4)-Mur2Ac(oyl-L-Ala-gamma-D-Glu-L-Lys-D-Ala-D-Ala)-di-trans,octa-cis-undecaprenyl diphosphate + UDP + H(+). Its pathway is cell wall biogenesis; peptidoglycan biosynthesis. In terms of biological role, cell wall formation. Catalyzes the transfer of a GlcNAc subunit on undecaprenyl-pyrophosphoryl-MurNAc-pentapeptide (lipid intermediate I) to form undecaprenyl-pyrophosphoryl-MurNAc-(pentapeptide)GlcNAc (lipid intermediate II). In Oenococcus oeni (strain ATCC BAA-331 / PSU-1), this protein is UDP-N-acetylglucosamine--N-acetylmuramyl-(pentapeptide) pyrophosphoryl-undecaprenol N-acetylglucosamine transferase.